Here is a 251-residue protein sequence, read N- to C-terminus: 3-deoxy-manno-octulosonate cytidylyltransferase (251 aa).

Belongs to the KdsB family.

The protein resides in the cytoplasm. The enzyme catalyses 3-deoxy-alpha-D-manno-oct-2-ulosonate + CTP = CMP-3-deoxy-beta-D-manno-octulosonate + diphosphate. The protein operates within nucleotide-sugar biosynthesis; CMP-3-deoxy-D-manno-octulosonate biosynthesis; CMP-3-deoxy-D-manno-octulosonate from 3-deoxy-D-manno-octulosonate and CTP: step 1/1. Its pathway is bacterial outer membrane biogenesis; lipopolysaccharide biosynthesis. Functionally, activates KDO (a required 8-carbon sugar) for incorporation into bacterial lipopolysaccharide in Gram-negative bacteria. This chain is 3-deoxy-manno-octulosonate cytidylyltransferase, found in Brucella ovis (strain ATCC 25840 / 63/290 / NCTC 10512).